The chain runs to 378 residues: Erythronate-4-phosphate dehydrogenase (378 aa).

Substrate is bound by residues S45 and T66. 2 residues coordinate NAD(+): D146 and T175. R208 is an active-site residue. Residue D232 participates in NAD(+) binding. E237 is an active-site residue. H254 (proton donor) is an active-site residue. Residue G257 coordinates NAD(+). Residue Y258 participates in substrate binding.

It belongs to the D-isomer specific 2-hydroxyacid dehydrogenase family. PdxB subfamily. Homodimer.

It is found in the cytoplasm. The catalysed reaction is 4-phospho-D-erythronate + NAD(+) = (R)-3-hydroxy-2-oxo-4-phosphooxybutanoate + NADH + H(+). Its pathway is cofactor biosynthesis; pyridoxine 5'-phosphate biosynthesis; pyridoxine 5'-phosphate from D-erythrose 4-phosphate: step 2/5. Its function is as follows. Catalyzes the oxidation of erythronate-4-phosphate to 3-hydroxy-2-oxo-4-phosphonooxybutanoate. This Shigella flexneri serotype 5b (strain 8401) protein is Erythronate-4-phosphate dehydrogenase.